The sequence spans 156 residues: Crossover junction endodeoxyribonuclease RuvC (156 aa).

Active-site residues include Asp7, Glu67, and Asp140. Residues Asp7, Glu67, and Asp140 each coordinate Mg(2+).

It belongs to the RuvC family. In terms of assembly, homodimer which binds Holliday junction (HJ) DNA. The HJ becomes 2-fold symmetrical on binding to RuvC with unstacked arms; it has a different conformation from HJ DNA in complex with RuvA. In the full resolvosome a probable DNA-RuvA(4)-RuvB(12)-RuvC(2) complex forms which resolves the HJ. The cofactor is Mg(2+).

Its subcellular location is the cytoplasm. The enzyme catalyses Endonucleolytic cleavage at a junction such as a reciprocal single-stranded crossover between two homologous DNA duplexes (Holliday junction).. The RuvA-RuvB-RuvC complex processes Holliday junction (HJ) DNA during genetic recombination and DNA repair. Endonuclease that resolves HJ intermediates. Cleaves cruciform DNA by making single-stranded nicks across the HJ at symmetrical positions within the homologous arms, yielding a 5'-phosphate and a 3'-hydroxyl group; requires a central core of homology in the junction. The consensus cleavage sequence is 5'-(A/T)TT(C/G)-3'. Cleavage occurs on the 3'-side of the TT dinucleotide at the point of strand exchange. HJ branch migration catalyzed by RuvA-RuvB allows RuvC to scan DNA until it finds its consensus sequence, where it cleaves and resolves the cruciform DNA. This is Crossover junction endodeoxyribonuclease RuvC from Rickettsia felis (strain ATCC VR-1525 / URRWXCal2) (Rickettsia azadi).